Here is an 814-residue protein sequence, read N- to C-terminus: DNA ligase (814 aa).

Residues 46–50 (DAEYD), 95–96 (SL), and Glu129 each bind NAD(+). Catalysis depends on Lys131, which acts as the N6-AMP-lysine intermediate. Residues Arg152, Glu189, Lys305, and Lys329 each contribute to the NAD(+) site. 4 residues coordinate Zn(2+): Cys434, Cys437, Cys458, and Cys464. The disordered stretch occupies residues 525-548 (LSAQRRSEGEPAPKKPTKKKGEEE). The 80-residue stretch at 735–814 (TSAAAFAGKT…DDWLAMLAEA (80 aa)) folds into the BRCT domain.

It belongs to the NAD-dependent DNA ligase family. LigA subfamily. The cofactor is Mg(2+). Mn(2+) is required as a cofactor.

It catalyses the reaction NAD(+) + (deoxyribonucleotide)n-3'-hydroxyl + 5'-phospho-(deoxyribonucleotide)m = (deoxyribonucleotide)n+m + AMP + beta-nicotinamide D-nucleotide.. DNA ligase that catalyzes the formation of phosphodiester linkages between 5'-phosphoryl and 3'-hydroxyl groups in double-stranded DNA using NAD as a coenzyme and as the energy source for the reaction. It is essential for DNA replication and repair of damaged DNA. This Methylorubrum extorquens (strain PA1) (Methylobacterium extorquens) protein is DNA ligase.